A 203-amino-acid chain; its full sequence is Pyridoxine/pyridoxamine 5'-phosphate oxidase (203 aa).

FMN is bound by residues 51–56 (RMVLLK), 66–67 (YT), Arg72, Lys73, and Gln95. Lys56 is a binding site for substrate. Tyr113, Arg117, and Ser121 together coordinate substrate. Residues 130-131 (QS) and Trp175 each bind FMN. Residue 181–183 (RLH) participates in substrate binding. Arg185 serves as a coordination point for FMN.

This sequence belongs to the pyridoxamine 5'-phosphate oxidase family. As to quaternary structure, homodimer. FMN is required as a cofactor.

The enzyme catalyses pyridoxamine 5'-phosphate + O2 + H2O = pyridoxal 5'-phosphate + H2O2 + NH4(+). It catalyses the reaction pyridoxine 5'-phosphate + O2 = pyridoxal 5'-phosphate + H2O2. It functions in the pathway cofactor metabolism; pyridoxal 5'-phosphate salvage; pyridoxal 5'-phosphate from pyridoxamine 5'-phosphate: step 1/1. The protein operates within cofactor metabolism; pyridoxal 5'-phosphate salvage; pyridoxal 5'-phosphate from pyridoxine 5'-phosphate: step 1/1. In terms of biological role, catalyzes the oxidation of either pyridoxine 5'-phosphate (PNP) or pyridoxamine 5'-phosphate (PMP) into pyridoxal 5'-phosphate (PLP). The polypeptide is Pyridoxine/pyridoxamine 5'-phosphate oxidase (Novosphingobium aromaticivorans (strain ATCC 700278 / DSM 12444 / CCUG 56034 / CIP 105152 / NBRC 16084 / F199)).